The following is a 113-amino-acid chain: uncharacterized protein (113 aa).

This is an uncharacterized protein from Methanocaldococcus jannaschii (strain ATCC 43067 / DSM 2661 / JAL-1 / JCM 10045 / NBRC 100440) (Methanococcus jannaschii).